A 248-amino-acid chain; its full sequence is Probable phosphatase VPA0505 (248 aa).

Zn(2+) contacts are provided by H8, H10, H16, H41, E74, H102, H132, D194, and H196.

Belongs to the PHP family. Requires Zn(2+) as cofactor.

This Vibrio parahaemolyticus serotype O3:K6 (strain RIMD 2210633) protein is Probable phosphatase VPA0505.